The following is a 124-amino-acid chain: Holo-[acyl-carrier-protein] synthase (124 aa).

Mg(2+) contacts are provided by aspartate 5 and glutamate 56.

The protein belongs to the P-Pant transferase superfamily. AcpS family. Requires Mg(2+) as cofactor.

It is found in the cytoplasm. It catalyses the reaction apo-[ACP] + CoA = holo-[ACP] + adenosine 3',5'-bisphosphate + H(+). Transfers the 4'-phosphopantetheine moiety from coenzyme A to a Ser of acyl-carrier-protein. The protein is Holo-[acyl-carrier-protein] synthase of Campylobacter hominis (strain ATCC BAA-381 / DSM 21671 / CCUG 45161 / LMG 19568 / NCTC 13146 / CH001A).